The primary structure comprises 227 residues: Peptidyl-tRNA hydrolase (227 aa).

Y14 contributes to the tRNA binding site. H19 functions as the Proton acceptor in the catalytic mechanism. 3 residues coordinate tRNA: F64, N66, and N112. The segment at 182–227 is disordered; that stretch reads RIALLTQPPKPPKPPKPPKDGAKETAGKGTEAETAKPPGPAAGRTG. Positions 198-215 are enriched in basic and acidic residues; sequence PPKDGAKETAGKGTEAET.

This sequence belongs to the PTH family. In terms of assembly, monomer.

Its subcellular location is the cytoplasm. The enzyme catalyses an N-acyl-L-alpha-aminoacyl-tRNA + H2O = an N-acyl-L-amino acid + a tRNA + H(+). Functionally, hydrolyzes ribosome-free peptidyl-tRNAs (with 1 or more amino acids incorporated), which drop off the ribosome during protein synthesis, or as a result of ribosome stalling. Catalyzes the release of premature peptidyl moieties from peptidyl-tRNA molecules trapped in stalled 50S ribosomal subunits, and thus maintains levels of free tRNAs and 50S ribosomes. This Rhodospirillum centenum (strain ATCC 51521 / SW) protein is Peptidyl-tRNA hydrolase.